Reading from the N-terminus, the 324-residue chain is MKPSVILYKTLPDDLQKRLEEHFTVTQMKNLNPETVAEHADAFASAAGLLGSSEKVDTALLEKMPKLRATSTISVGYDNFDVDALNTRKILLMHTPYALTETVADTLMALVLSTARRVVEVAERVKAGEWTKSIGPDWFGVDVHGKTLGIVGMGRIGLALAQRAHFGFNMPILYNARRHHSEAEERFEARYCELETLLQEADYVCLILPLTDETHHLIGKAEFEKMKKSAIFINAGRGPVVDEKALIEALQKGEIHAAGLDVFEQEPLPVDSPLLTMSNVVSLPHIGSATHETRYNMAATAVDNLINALNGNVEKNCVNPHVNA.

Catalysis depends on residues R237 and E266. H285 serves as the catalytic Proton donor.

Belongs to the D-isomer specific 2-hydroxyacid dehydrogenase family. GhrB subfamily. In terms of assembly, homodimer.

The protein resides in the cytoplasm. The enzyme catalyses glycolate + NADP(+) = glyoxylate + NADPH + H(+). It carries out the reaction (R)-glycerate + NAD(+) = 3-hydroxypyruvate + NADH + H(+). It catalyses the reaction (R)-glycerate + NADP(+) = 3-hydroxypyruvate + NADPH + H(+). In terms of biological role, catalyzes the NADPH-dependent reduction of glyoxylate and hydroxypyruvate into glycolate and glycerate, respectively. This Enterobacter sp. (strain 638) protein is Glyoxylate/hydroxypyruvate reductase B.